The following is a 590-amino-acid chain: Aspartate--tRNA(Asp/Asn) ligase (590 aa).

Glutamate 176 provides a ligand contact to L-aspartate. The aspartate stretch occupies residues 200 to 203 (QLFK). L-aspartate-binding residues include arginine 222 and histidine 451. Residue 222 to 224 (RDE) participates in ATP binding. Glutamate 485 provides a ligand contact to ATP. Arginine 492 provides a ligand contact to L-aspartate. 537–540 (GIDR) serves as a coordination point for ATP.

The protein belongs to the class-II aminoacyl-tRNA synthetase family. Type 1 subfamily. In terms of assembly, homodimer.

It localises to the cytoplasm. The enzyme catalyses tRNA(Asx) + L-aspartate + ATP = L-aspartyl-tRNA(Asx) + AMP + diphosphate. Its function is as follows. Aspartyl-tRNA synthetase with relaxed tRNA specificity since it is able to aspartylate not only its cognate tRNA(Asp) but also tRNA(Asn). Reaction proceeds in two steps: L-aspartate is first activated by ATP to form Asp-AMP and then transferred to the acceptor end of tRNA(Asp/Asn). This chain is Aspartate--tRNA(Asp/Asn) ligase, found in Ehrlichia ruminantium (strain Welgevonden).